Consider the following 194-residue polypeptide: Dof zinc finger protein DOF1.7 (194 aa).

Residues 33–87 (LKCPRCDSPNTKFCYYNNYNLSQPRHFCKNCRRYWTKGGALRNIPVGGGTRKSNK) form a Dof-type zinc finger. Residues C35, C38, C60, and C63 each contribute to the Zn(2+) site. The disordered stretch occupies residues 74-125 (RNIPVGGGTRKSNKRSGSSPSSNLKNQTVAEKPDHHGSGSEEKEERVSGQEM). Over residues 88–99 (RSGSSPSSNLKN) the composition is skewed to low complexity. The segment covering 104–121 (EKPDHHGSGSEEKEERVS) has biased composition (basic and acidic residues).

It localises to the nucleus. In terms of biological role, transcription factor that binds specifically to a 5'-AA[AG]G-3' consensus core sequence. This Arabidopsis thaliana (Mouse-ear cress) protein is Dof zinc finger protein DOF1.7 (DOF1.7).